Reading from the N-terminus, the 681-residue chain is Cell cycle checkpoint protein RAD17 (681 aa).

The RAD1-binding motif signature appears at aspartate 17–aspartate 25. Residues valine 42–phenylalanine 61 are disordered. Residue threonine 55 is modified to Phosphothreonine. Phosphoserine is present on residues serine 71 and serine 86. Residue glycine 137 to threonine 144 coordinates ATP. 2 disordered regions span residues serine 344–arginine 377 and histidine 606–threonine 681. Serine 359 is subject to Phosphoserine. The interaction with MCM7 stretch occupies residues leucine 432 to threonine 681. A compositionally biased stretch (polar residues) spans glutamate 631–serine 662. At threonine 633 the chain carries Phosphothreonine; by ATM. Phosphoserine; by ATR and ATM is present on residues serine 646 and serine 656. Acidic residues predominate over residues aspartate 666–threonine 681.

Belongs to the rad17/RAD24 family. Part of a DNA-binding complex containing RFC2, RFC3, RFC4 and RFC5. Interacts with RAD1 and RAD9 within the 9-1-1 (RAD1-RAD9-HUS1) complex. Interacts with RAD9B, POLE, SNU13 and MCM7. DNA damage promotes interaction with ATR or ATM and disrupts interaction with the 9-1-1 (RAD1-RAD9-HUS1) complex. Interacts (when phosphorylated) with NBN; promoting recruitment of the MRN complex to DNA damage sites. Phosphorylation on Ser-646 and Ser-656 is cell cycle-regulated, enhanced by genotoxic stress, and required for activation of checkpoint signaling. Phosphorylation is mediated by ATR upon UV or replication arrest, whereas it may be mediated both by ATR and ATM upon ionizing radiation. Phosphorylation on both sites is required for interaction with RAD1 but dispensable for interaction with RFC3 or RFC4. Phosphorylation at Thr-633 by ATM in response to DNA damage promotes interaction with NBN and recruitment of the MRN complex to DNA damage sites. Overexpressed in various cancer cell lines and in colon carcinoma (at protein level). Isoform 2 and isoform 3 are the most abundant isoforms in non irradiated cells (at protein level). Ubiquitous at low levels. Highly expressed in testis, where it is expressed within the germinal epithelium of the seminiferous tubuli. Weakly expressed in seminomas (testicular tumors).

It is found in the nucleus. The protein localises to the chromosome. Essential for sustained cell growth, maintenance of chromosomal stability, and ATR-dependent checkpoint activation upon DNA damage. Has a weak ATPase activity required for binding to chromatin. Participates in the recruitment of the 9-1-1 (RAD1-RAD9-HUS1) complex and RHNO1 onto chromatin, and in CHEK1 activation. Involved in homologous recombination by mediating recruitment of the MRN complex to DNA damage sites. May also serve as a sensor of DNA replication progression. This is Cell cycle checkpoint protein RAD17 from Homo sapiens (Human).